The primary structure comprises 391 residues: Winged helix repair factor 1 (391 aa).

Composition is skewed to low complexity over residues 1–24 (MNIK…PSPI) and 49–63 (LSFN…SNIN). The disordered stretch occupies residues 1 to 95 (MNIKRNQNNS…SITTTTATST (95 aa)). A compositionally biased stretch (acidic residues) spans 64 to 74 (GEEDNDDDDRE). The segment covering 82–95 (NPNPSITTTTATST) has biased composition (low complexity).

It belongs to the STK19 family.

It is found in the nucleus. DNA-binding protein which is required for efficient transcription-coupled nucleotide excision repair. This Dictyostelium discoideum (Social amoeba) protein is Winged helix repair factor 1.